A 355-amino-acid polypeptide reads, in one-letter code: S-adenosylmethionine:tRNA ribosyltransferase-isomerase (355 aa).

The protein belongs to the QueA family. Monomer.

It localises to the cytoplasm. The enzyme catalyses 7-aminomethyl-7-carbaguanosine(34) in tRNA + S-adenosyl-L-methionine = epoxyqueuosine(34) in tRNA + adenine + L-methionine + 2 H(+). It participates in tRNA modification; tRNA-queuosine biosynthesis. Transfers and isomerizes the ribose moiety from AdoMet to the 7-aminomethyl group of 7-deazaguanine (preQ1-tRNA) to give epoxyqueuosine (oQ-tRNA). In Jannaschia sp. (strain CCS1), this protein is S-adenosylmethionine:tRNA ribosyltransferase-isomerase.